A 244-amino-acid chain; its full sequence is CTD nuclear envelope phosphatase 1 (244 aa).

The helical transmembrane segment at 7 to 29 threads the bilayer; sequence LLGLRGFVAFAAKLWSFVLYLLR. The FCP1 homology domain occupies 57–224; that stretch reads SQVKRKVLVL…LNLLPMLDAL (168 aa).

Belongs to the dullard family. In terms of assembly, interacts with bmpr1a, bmpr1b and bmpr2.

Its subcellular location is the membrane. It localises to the cytoplasm. The protein resides in the perinuclear region. It carries out the reaction O-phospho-L-seryl-[protein] + H2O = L-seryl-[protein] + phosphate. The enzyme catalyses O-phospho-L-threonyl-[protein] + H2O = L-threonyl-[protein] + phosphate. Its function is as follows. Serine/threonine protein phosphatase that may dephosphorylate and activate lipins. Lipins are phosphatidate phosphatases that catalyze the conversion of phosphatidic acid to diacylglycerol and control the metabolism of fatty acids at different levels. May indirectly modulate the lipid composition of nuclear and/or endoplasmic reticulum membranes and be required for proper nuclear membrane morphology and/or dynamics. May also indirectly regulate the production of lipid droplets and triacylglycerol. Induces neuronal differentiation by antagonizing BMP signaling. Acts both by dephosphorylating BMPR1A and by promoting BMPR2 proteasomal degradation. The chain is CTD nuclear envelope phosphatase 1 (ctdnep1) from Xenopus tropicalis (Western clawed frog).